The following is a 116-amino-acid chain: Holo-[acyl-carrier-protein] synthase (116 aa).

Residues Asp8 and Glu59 each contribute to the Mg(2+) site.

The protein belongs to the P-Pant transferase superfamily. AcpS family. Mg(2+) is required as a cofactor.

It is found in the cytoplasm. The catalysed reaction is apo-[ACP] + CoA = holo-[ACP] + adenosine 3',5'-bisphosphate + H(+). Functionally, transfers the 4'-phosphopantetheine moiety from coenzyme A to a Ser of acyl-carrier-protein. The sequence is that of Holo-[acyl-carrier-protein] synthase from Staphylococcus saprophyticus subsp. saprophyticus (strain ATCC 15305 / DSM 20229 / NCIMB 8711 / NCTC 7292 / S-41).